The following is a 129-amino-acid chain: MMRVSEEEAKRIAERLNYRWPDRTVVAVAQEYKSGKVLMVASMNKEAVIKTLTTGIVHYWSKSRKELWVKGATSGHVQVLEKFYYDCDADSVLLVVRQASLIACHEGYRSCFHYKVEEGGVKVEEPSYE.

Aspartate 86 is a binding site for Mg(2+). Cysteine 87 lines the Zn(2+) pocket. Aspartate 88 and aspartate 90 together coordinate Mg(2+). 2 residues coordinate Zn(2+): cysteine 104 and cysteine 111.

Belongs to the PRA-CH family. As to quaternary structure, homodimer. The cofactor is Mg(2+). Requires Zn(2+) as cofactor.

It localises to the cytoplasm. The enzyme catalyses 1-(5-phospho-beta-D-ribosyl)-5'-AMP + H2O = 1-(5-phospho-beta-D-ribosyl)-5-[(5-phospho-beta-D-ribosylamino)methylideneamino]imidazole-4-carboxamide. It participates in amino-acid biosynthesis; L-histidine biosynthesis; L-histidine from 5-phospho-alpha-D-ribose 1-diphosphate: step 3/9. Its function is as follows. Catalyzes the hydrolysis of the adenine ring of phosphoribosyl-AMP. The sequence is that of Phosphoribosyl-AMP cyclohydrolase from Ignicoccus hospitalis (strain KIN4/I / DSM 18386 / JCM 14125).